A 213-amino-acid polypeptide reads, in one-letter code: Large ribosomal subunit protein uL1 (213 aa).

The protein belongs to the universal ribosomal protein uL1 family. Part of the 50S ribosomal subunit.

Its function is as follows. Binds directly to 23S rRNA. Probably involved in E site tRNA release. Protein L1 is also a translational repressor protein, it controls the translation of its operon by binding to its mRNA. The protein is Large ribosomal subunit protein uL1 of Methanosarcina acetivorans (strain ATCC 35395 / DSM 2834 / JCM 12185 / C2A).